The primary structure comprises 173 residues: Dual-action ribosomal maturation protein DarP (173 aa).

Belongs to the DarP family.

It localises to the cytoplasm. Member of a network of 50S ribosomal subunit biogenesis factors which assembles along the 30S-50S interface, preventing incorrect 23S rRNA structures from forming. Promotes peptidyl transferase center (PTC) maturation. The polypeptide is Dual-action ribosomal maturation protein DarP (Pseudomonas syringae pv. tomato (strain ATCC BAA-871 / DC3000)).